A 225-amino-acid chain; its full sequence is Ribonuclease T (225 aa).

The tract at residues 1–21 is disordered; that stretch reads MSEDHFDDEHEGHGGGGGSRH. Residues 33-207 enclose the Exonuclease domain; that stretch reads VVVDVETGGF…YDTEKTAELF (175 aa). Asp-36, Glu-38, His-194, and Asp-199 together coordinate Mg(2+). His-194 serves as the catalytic Proton donor/acceptor.

This sequence belongs to the RNase T family. Homodimer. Requires Mg(2+) as cofactor.

Functionally, trims short 3' overhangs of a variety of RNA species, leaving a one or two nucleotide 3' overhang. Responsible for the end-turnover of tRNA: specifically removes the terminal AMP residue from uncharged tRNA (tRNA-C-C-A). Also appears to be involved in tRNA biosynthesis. This chain is Ribonuclease T, found in Pseudomonas savastanoi pv. phaseolicola (strain 1448A / Race 6) (Pseudomonas syringae pv. phaseolicola (strain 1448A / Race 6)).